The primary structure comprises 271 residues: Elongation factor Ts (271 aa).

Residues Thr-76–Val-79 form an involved in Mg(2+) ion dislocation from EF-Tu region.

This sequence belongs to the EF-Ts family.

It is found in the cytoplasm. Functionally, associates with the EF-Tu.GDP complex and induces the exchange of GDP to GTP. It remains bound to the aminoacyl-tRNA.EF-Tu.GTP complex up to the GTP hydrolysis stage on the ribosome. This chain is Elongation factor Ts, found in Mycobacterium bovis (strain BCG / Pasteur 1173P2).